We begin with the raw amino-acid sequence, 382 residues long: Lipid-A-disaccharide synthase (382 aa).

The protein belongs to the LpxB family.

It catalyses the reaction 2-N,3-O-bis[(3R)-3-hydroxytetradecanoyl]-alpha-D-glucosaminyl 1-phosphate + UDP-2-N,3-O-bis[(3R)-3-hydroxytetradecanoyl]-alpha-D-glucosamine = lipid A disaccharide (E. coli) + UDP + H(+). The enzyme catalyses a lipid X + a UDP-2-N,3-O-bis[(3R)-3-hydroxyacyl]-alpha-D-glucosamine = a lipid A disaccharide + UDP + H(+). It participates in glycolipid biosynthesis; lipid IV(A) biosynthesis; lipid IV(A) from (3R)-3-hydroxytetradecanoyl-[acyl-carrier-protein] and UDP-N-acetyl-alpha-D-glucosamine: step 5/6. Condensation of UDP-2,3-diacylglucosamine and 2,3-diacylglucosamine-1-phosphate to form lipid A disaccharide, a precursor of lipid A, a phosphorylated glycolipid that anchors the lipopolysaccharide to the outer membrane of the cell. The sequence is that of Lipid-A-disaccharide synthase from Shigella flexneri.